The chain runs to 126 residues: Histone H2B 8 (126 aa).

The span at 1–12 shows a compositional bias: low complexity; the sequence is MPEPAKSAPAPK. The interval 1 to 35 is disordered; the sequence is MPEPAKSAPAPKKGSKKAVTKTQKKGDKKRRKTRK. An N6-acetyllysine mark is found at lysine 6 and lysine 13. The segment covering 13–34 has biased composition (basic residues); sequence KGSKKAVTKTQKKGDKKRRKTR. Phosphoserine is present on serine 15. Lysine 16 and lysine 21 each carry N6-acetyllysine. Serine 113 is a glycosylation site (O-linked (GlcNAc) serine). Lysine 121 participates in a covalent cross-link: Glycyl lysine isopeptide (Lys-Gly) (interchain with G-Cter in ubiquitin).

It belongs to the histone H2B family. In terms of assembly, the nucleosome is a histone octamer containing two molecules each of H2A, H2B, H3 and H4 assembled in one H3-H4 heterotetramer and two H2A-H2B heterodimers. The octamer wraps approximately 147 bp of DNA. In terms of processing, monoubiquitination of Lys-121 by the BRE1 gives a specific tag for epigenetic transcriptional activation and is also prerequisite for histone H3 'Lys-4' and 'Lys-79' methylation. Post-translationally, phosphorylated on Ser-15 during apoptosis; which facilitates apoptotic chromatin condensation. GlcNAcylation at Ser-113 promotes monoubiquitination of Lys-121. It fluctuates in response to extracellular glucose, and associates with transcribed genes.

The protein resides in the nucleus. The protein localises to the chromosome. Functionally, core component of nucleosome. Nucleosomes wrap and compact DNA into chromatin, limiting DNA accessibility to the cellular machineries which require DNA as a template. Histones thereby play a central role in transcription regulation, DNA repair, DNA replication and chromosomal stability. DNA accessibility is regulated via a complex set of post-translational modifications of histones, also called histone code, and nucleosome remodeling. The sequence is that of Histone H2B 8 (H2B-VIII) from Gallus gallus (Chicken).